Reading from the N-terminus, the 165-residue chain is MSKMCSSVEIGDSMIYIFLFLILLIIDQYSKFIVDSTLSVGETVPVIDGFFNLTYVQNRGVAFGLFQGKIDIVSILAVIAIGLILFYFCKNFKKISFLERIAYTMIFSGAIGNMIDRLFRAYVVDMLDFRGIWSFIFNFADVWINIGVVLIIVEHIFFNRKKRVK.

The next 3 helical transmembrane spans lie at 6 to 26, 68 to 88, and 95 to 115; these read SSVEIGDSMIYIFLFLILLII, GKIDIVSILAVIAIGLILFYF, and ISFLERIAYTMIFSGAIGNMI. Catalysis depends on residues Asp-125 and Asp-141. A helical transmembrane segment spans residues 132-152; it reads IWSFIFNFADVWINIGVVLII.

Belongs to the peptidase A8 family.

The protein resides in the cell inner membrane. It carries out the reaction Release of signal peptides from bacterial membrane prolipoproteins. Hydrolyzes -Xaa-Yaa-Zaa-|-(S,diacylglyceryl)Cys-, in which Xaa is hydrophobic (preferably Leu), and Yaa (Ala or Ser) and Zaa (Gly or Ala) have small, neutral side chains.. Its pathway is protein modification; lipoprotein biosynthesis (signal peptide cleavage). In terms of biological role, this protein specifically catalyzes the removal of signal peptides from prolipoproteins. This Fusobacterium nucleatum subsp. nucleatum (strain ATCC 25586 / DSM 15643 / BCRC 10681 / CIP 101130 / JCM 8532 / KCTC 2640 / LMG 13131 / VPI 4355) protein is Lipoprotein signal peptidase.